A 179-amino-acid chain; its full sequence is Protein PLASTID REDOX INSENSITIVE 2, chloroplastic (179 aa).

The N-terminal 69 residues, 1-69 (MASMHEALFS…SLSRRGFVCR (69 aa)), are a transit peptide targeting the chloroplast.

As to quaternary structure, binds DNA when in complex with CSP41b.

The protein localises to the plastid. It localises to the chloroplast stroma. Its subcellular location is the chloroplast nucleoid. In terms of biological role, involved in redox-mediated retrograde signaling to synchronize the expression of photosynthetic genes from both the nuclear and plastidic genomes, especially in excess light conditions. Required for full expression of genes transcribed by the plastid-encoded RNA polymerase (PEP). Essential for embryo development. The chain is Protein PLASTID REDOX INSENSITIVE 2, chloroplastic from Arabidopsis thaliana (Mouse-ear cress).